The sequence spans 877 residues: Probable alpha/beta-glucosidase agdC (877 aa).

The first 14 residues, 1-14 (MLGSLLLLAPLAGA), serve as a signal peptide directing secretion. N-linked (GlcNAc...) asparagine glycosylation is found at N171, N293, and N373. The Nucleophile role is filled by D422. The active site involves E425. Positions 432–476 (DPCTDPERYSSENNLPPAPPPVRSSSPRPLPGFPADFQPSSASRS) are disordered. Residues 447–463 (PPAPPPVRSSSPRPLPG) show a composition bias toward pro residues. A glycan (N-linked (GlcNAc...) asparagine) is linked at N508. The active-site Proton donor is D573. N-linked (GlcNAc...) asparagine glycans are attached at residues N574, N610, and N744.

Belongs to the glycosyl hydrolase 31 family.

It localises to the secreted. It carries out the reaction Hydrolysis of terminal, non-reducing (1-&gt;4)-linked alpha-D-glucose residues with release of alpha-D-glucose.. It catalyses the reaction Hydrolysis of terminal, non-reducing beta-D-glucosyl residues with release of beta-D-glucose.. Glucosidase involved in the degradation of cellulosic biomass. Has both alpha- and beta-glucosidase activity. The sequence is that of Probable alpha/beta-glucosidase agdC (agdC) from Aspergillus flavus (strain ATCC 200026 / FGSC A1120 / IAM 13836 / NRRL 3357 / JCM 12722 / SRRC 167).